The primary structure comprises 179 residues: MNRLKEKFNTEVTENLVKKFNYSSVMEVPKIEKIVVNMGVGDAVQNSKVLDNAVEELELITGQKPLVTKAKKSVATFRLREGMPIGAKVTLRGERMYEFLDKLIAVSLPRVRDFQGVSKTAFDGRGNYTLGVKEQLIFPEIDYDKVTKVRGMDIVIVTTANTDEEARELLTNFGMPFRK.

Belongs to the universal ribosomal protein uL5 family. As to quaternary structure, part of the 50S ribosomal subunit; part of the 5S rRNA/L5/L18/L25 subcomplex. Contacts the 5S rRNA and the P site tRNA. Forms a bridge to the 30S subunit in the 70S ribosome.

Functionally, this is one of the proteins that bind and probably mediate the attachment of the 5S RNA into the large ribosomal subunit, where it forms part of the central protuberance. In the 70S ribosome it contacts protein S13 of the 30S subunit (bridge B1b), connecting the 2 subunits; this bridge is implicated in subunit movement. Contacts the P site tRNA; the 5S rRNA and some of its associated proteins might help stabilize positioning of ribosome-bound tRNAs. In Staphylococcus epidermidis (strain ATCC 35984 / DSM 28319 / BCRC 17069 / CCUG 31568 / BM 3577 / RP62A), this protein is Large ribosomal subunit protein uL5.